The following is a 519-amino-acid chain: MSPLAILISILLSLFCLVVGYYVRKIIAEAKISGARNAAEQILGDAKRDAEALKKEALLEAKDEIHTLRIEAEQEVRERRNELQKQENRLLQKEENLDRKDESLDKREAMLEKKDHSLNERQQHIEEMESKVDEMIRMQQSELERISSLTRDEAKQIILERVENELSHDIAIMMKESENRAKEEADKKAKNILSLALQRCAADHVAETTVSVVNLPNDEMKGRIIGREGRNIRTLETLTGIDLIIDDTPEAVILSGFDPIRRETARIALDKLVQDGRIHPARIEEMVEKSRREVDDYIREMGEQTTFEVGVHGLHPDLIKILGRLKFRTSYGQNVLKHSMEVAFLTGLMASELGEDVTLAKRAGLLHDIGKAIDHEVEGSHVEIGVELATKYKEHPVVINSIASHHGDQEPTSIIAVLVAAADALSAARPGARSETLENYIRRLEKLEEISESYEGVEKSFAIQAGREVRIMVKPDSINDLEAHRLARDIRKRIEDELDYPGHIKVTVIRETRAVEYAK.

The chain crosses the membrane as a helical span at residues 3–23 (PLAILISILLSLFCLVVGYYV). The 64-residue stretch at 209-272 (TVSVVNLPND…ETARIALDKL (64 aa)) folds into the KH domain. The 94-residue stretch at 335–428 (VLKHSMEVAF…VAAADALSAA (94 aa)) folds into the HD domain.

It belongs to the RNase Y family.

It localises to the cell membrane. Functionally, endoribonuclease that initiates mRNA decay. This chain is Ribonuclease Y, found in Bacillus licheniformis (strain ATCC 14580 / DSM 13 / JCM 2505 / CCUG 7422 / NBRC 12200 / NCIMB 9375 / NCTC 10341 / NRRL NRS-1264 / Gibson 46).